The following is a 102-amino-acid chain: Small ribosomal subunit protein uS10 (102 aa).

Belongs to the universal ribosomal protein uS10 family. As to quaternary structure, part of the 30S ribosomal subunit.

Involved in the binding of tRNA to the ribosomes. The chain is Small ribosomal subunit protein uS10 from Bifidobacterium longum subsp. infantis (strain ATCC 15697 / DSM 20088 / JCM 1222 / NCTC 11817 / S12).